Reading from the N-terminus, the 437-residue chain is Phenylacetate-coenzyme A ligase (437 aa).

The protein belongs to the phenylacetyl-CoA ligase family. As to quaternary structure, monomer.

The catalysed reaction is 2-phenylacetate + ATP + CoA = phenylacetyl-CoA + AMP + diphosphate. Its pathway is aromatic compound metabolism; phenylacetate degradation. Its function is as follows. Catalyzes the activation of phenylacetic acid (PA) to phenylacetyl-CoA (PA-CoA). This Escherichia coli (strain K12) protein is Phenylacetate-coenzyme A ligase (paaK).